A 171-amino-acid polypeptide reads, in one-letter code: L-methionine sulfoximine/L-methionine sulfone acetyltransferase (171 aa).

The region spanning 1-163 (MTIRFADKAD…DLTFMQLQLD (163 aa)) is the N-acetyltransferase domain. Substrate is bound by residues 72–74 (RSF) and 82–84 (EHS). Residues 85-87 (VYV), 93-98 (GKGLGR), asparagine 124, and serine 133 contribute to the acetyl-CoA site.

As to quaternary structure, homodimer.

It carries out the reaction L-methionine sulfoximine + acetyl-CoA = N-acetyl-L-methionine sulfoximine + CoA + H(+). The catalysed reaction is L-methionine sulfone + acetyl-CoA = N-acetyl-L-methionine sulfone + CoA + H(+). Plays a role in the resistance against the toxic effects of L-methionine sulfoximine (MSX), a rare amino acid which inhibits glutamine synthetase (GlnA). Catalyzes the acetylation of MSX. It can also use L-methionine sulfone (MSO). Also catalyzes the acylation of free L-amino acids using an acyl-CoA as acyl donor. The chain is L-methionine sulfoximine/L-methionine sulfone acetyltransferase (yncA) from Salmonella typhimurium (strain LT2 / SGSC1412 / ATCC 700720).